A 780-amino-acid chain; its full sequence is Zinc finger protein GLIS3 (780 aa).

Composition is skewed to polar residues over residues P80 to T92 and V106 to L115. 2 disordered regions span residues P80–A148 and P290–H315. Residues S135–A148 are compositionally biased toward basic residues. Pro residues predominate over residues L293 to H308. A C2H2-type 1 zinc finger spans residues H345–H370. The C2H2-type 2; atypical zinc-finger motif lies at F379–H406. 3 C2H2-type zinc fingers span residues N412 to H436, Y442 to H466, and Y472 to H496. 2 disordered regions span residues D485–E512 and L527–G670. Positions R490–K506 match the Bipartite nuclear localization signal motif. Positions S497–E512 are enriched in basic and acidic residues. Positions H567–A577 are enriched in low complexity. Polar residues predominate over residues V593–P605.

Belongs to the GLI C2H2-type zinc-finger protein family. In the embryo, expressed at high levels in the kidney and testis. In the adult, expressed at high levels in the kidney and uterus and at lower levels in the brain, lung, skeletal muscle and pancreas.

It is found in the nucleus. Functionally, acts both as a repressor and activator of transcription. Binds to the consensus sequence 5'-GACCACCCAC-3'. This is Zinc finger protein GLIS3 from Mus musculus (Mouse).